The primary structure comprises 212 residues: KxDL motif-containing protein CG10681 (212 aa).

The interval 128–159 (RSSLAEEAEDDTEAQAKKTAETPAPAAAKPVL) is disordered. Residues 148–157 (ETPAPAAAKP) are compositionally biased toward low complexity.

It belongs to the KXD1 family.

The polypeptide is KxDL motif-containing protein CG10681 (Drosophila melanogaster (Fruit fly)).